Reading from the N-terminus, the 349-residue chain is Small ribosomal subunit protein uS2 (349 aa).

This sequence belongs to the universal ribosomal protein uS2 family.

This chain is Small ribosomal subunit protein uS2, found in Methylocella silvestris (strain DSM 15510 / CIP 108128 / LMG 27833 / NCIMB 13906 / BL2).